The sequence spans 1312 residues: Retinoblastoma-like protein A (1312 aa).

Disordered stretches follow at residues 1 to 67, 168 to 231, 336 to 359, 536 to 611, 987 to 1023, 1168 to 1236, and 1249 to 1312; these read MMAH…NNEN, SSSS…KNSS, HNYNNNSNNNNNNNNNNNNNNNNN, NNNN…IYGT, NNNNNNNNNNNNNNNNNNNNNNINNNNNNNENNNNNN, KKND…NNTE, and EESP…RLKS. Low complexity predominate over residues 10–67; that stretch reads TNINTKTTAPTTTTTEQQPEQQQQQPEQQQQEKQNNNNNNNNNNNNNNNINNNENNEN. Residues 36–117 are a coiled coil; sequence EQQQQEKQNN…TSSALNVDQD (82 aa). A compositionally biased stretch (polar residues) spans 168 to 179; it reads SSSSFQPDNNSK. Over residues 180 to 189 the composition is skewed to basic residues; sequence IKGRKIRKTN. A coiled-coil region spans residues 195 to 230; that stretch reads NNDSNEEEEETTTDTEEEEEEDTLLNENNNSINKNS. The segment covering 198–218 has biased composition (acidic residues); that stretch reads SNEEEEETTTDTEEEEEEDTL. Composition is skewed to low complexity over residues 219–231, 337–359, and 536–595; these read LNENNNSINKNSS, NYNNNSNNNNNNNNNNNNNNNNN, and NNNN…SSSS. 3 stretches are compositionally biased toward low complexity: residues 1185 to 1234, 1251 to 1275, and 1286 to 1305; these read NNNN…NNNN, SPSTPSSSSSPTILNNNKKNNNNNK, and SPSSSPLSSSSSSSSSSSSG.

The protein belongs to the retinoblastoma protein (RB) family.

Its subcellular location is the nucleus. Functionally, key regulator of entry into cell division. Directly involved in heterochromatin formation by maintaining overall chromatin structure and, in particular, that of constitutive heterochromatin by stabilizing histone methylation. Controls histone H4 'Lys-20' trimethylation. Probably acts as a transcription repressor by recruiting chromatin-modifying enzymes to promoters. Plays a dual role, regulating cell-cycle progression and transcriptional events leading to terminal differentiation. In the absence of a G1 phase, functions in late G2 controlling the expression of both S-phase and mitotic genes. Controls stalk/spore preference by suppressing the DIF response in cells destined for the spore pathway. DIF is a chlorinated hydroxyphenone made by cells of spore pathway that promotes stalk differentiation. This Dictyostelium discoideum (Social amoeba) protein is Retinoblastoma-like protein A.